The sequence spans 548 residues: Probable 5-epi-aristolochene synthase 4 (548 aa).

Residues aspartate 301, aspartate 305, aspartate 444, threonine 448, and glutamate 452 each coordinate Mg(2+). The DDXXD motif signature appears at 301–305; that stretch reads DDTFD.

The protein belongs to the terpene synthase family. As to quaternary structure, monomer. Mg(2+) is required as a cofactor.

It is found in the cytoplasm. The catalysed reaction is (2E,6E)-farnesyl diphosphate = (+)-5-epi-aristolochene + diphosphate. The protein operates within secondary metabolite biosynthesis; terpenoid biosynthesis. In terms of biological role, catalyzes the cyclization of trans,trans-farnesyl diphosphate (FPP) to the bicyclic intermediate 5-epi-aristolochene, initial step in the conversion of FPP to the sesquiterpenoid antifungal phytoalexin capsidiol. Produces germacrene A as an enzyme-bound intermediate that is not released by the enzyme, but is further cyclized to produce the bicyclic 5-epi-aristolochene. The protein is Probable 5-epi-aristolochene synthase 4 of Nicotiana attenuata (Coyote tobacco).